The following is a 1439-amino-acid chain: Probable histone acetyltransferase HAC-like 2 (1439 aa).

Disordered regions lie at residues 1-43 (MKQG…ASAD) and 313-335 (YGISPNKPLQRHVNPSTRSTPTP). Polar residues predominate over residues 325 to 335 (VNPSTRSTPTP). A TAZ-type zinc finger spans residues 607 to 687 (ENTKQYHAQA…NEHCHVCCKA (81 aa)). The segment at 827-933 (KIHCHVQQET…EYTCFKCYIE (107 aa)) adopts a PHD-type; degenerate zinc-finger fold. Positions 948-1383 (VRGAKDLPRT…MLYHLHNPTG (436 aa)) constitute a CBP/p300-type HAT domain. Positions 964–989 (EERLFKRLREERQERANKLKTSLDEV) form a coiled coil. Acetyl-CoA-binding positions include 1071-1073 (LDS), 1090-1091 (RT), and Trp-1146. A ZZ-type zinc finger spans residues 1265–1328 (HLQYSCSHCC…ILHPVEIVGV (64 aa)). Zn(2+)-binding residues include Cys-1270, Cys-1273, Cys-1285, Cys-1288, Cys-1294, Cys-1297, His-1310, and His-1318.

It is found in the nucleus. The enzyme catalyses L-lysyl-[protein] + acetyl-CoA = N(6)-acetyl-L-lysyl-[protein] + CoA + H(+). Its function is as follows. Acetyltransferase enzyme. Acetylates histones, giving a specific tag for transcriptional activation. The chain is Probable histone acetyltransferase HAC-like 2 from Oryza sativa subsp. japonica (Rice).